The primary structure comprises 505 residues: Serine carboxypeptidase-like 47 (505 aa).

The N-terminal stretch at 1–22 is a signal peptide; that stretch reads MEAKTFFLFMLFIFSQSWLSTS. N-linked (GlcNAc...) asparagine glycans are attached at residues asparagine 37, asparagine 86, and asparagine 122. 3 disulfides stabilise this stretch: cysteine 138-cysteine 378, cysteine 306-cysteine 321, and cysteine 344-cysteine 349. Serine 228 is an active-site residue. An N-linked (GlcNAc...) asparagine glycan is attached at asparagine 301. Residue aspartate 416 is part of the active site. 2 N-linked (GlcNAc...) asparagine glycosylation sites follow: asparagine 432 and asparagine 444. The active site involves histidine 473.

The protein belongs to the peptidase S10 family. Expressed in roots, flowers and siliques.

Its subcellular location is the secreted. Functionally, probable carboxypeptidase. This chain is Serine carboxypeptidase-like 47 (SCPL47), found in Arabidopsis thaliana (Mouse-ear cress).